The primary structure comprises 248 residues: tRNA (guanine-N(1)-)-methyltransferase (248 aa).

S-adenosyl-L-methionine contacts are provided by residues glycine 113 and 133 to 138 (IGDFVL).

This sequence belongs to the RNA methyltransferase TrmD family. As to quaternary structure, homodimer.

The protein resides in the cytoplasm. The catalysed reaction is guanosine(37) in tRNA + S-adenosyl-L-methionine = N(1)-methylguanosine(37) in tRNA + S-adenosyl-L-homocysteine + H(+). Its function is as follows. Specifically methylates guanosine-37 in various tRNAs. The sequence is that of tRNA (guanine-N(1)-)-methyltransferase from Dehalococcoides mccartyi (strain CBDB1).